We begin with the raw amino-acid sequence, 325 residues long: Probable WRKY transcription factor 11 (325 aa).

A DNA-binding region (WRKY) is located at residues 240–306 (KIADIPPDEY…YEGEHRHNQS (67 aa)).

The protein belongs to the WRKY group II-d family. In terms of tissue distribution, in young, mature and senescent leaves.

It localises to the nucleus. Its function is as follows. Transcription factor. Interacts specifically with the W box (5'-(T)TGAC[CT]-3'), a frequently occurring elicitor-responsive cis-acting element. Regulates rhizobacterium B.cereus AR156-induced systemic resistance (ISR) to P.syringae pv. tomato DC3000, probably by activating the jasmonic acid (JA)- signaling pathway. The protein is Probable WRKY transcription factor 11 (WRKY11) of Arabidopsis thaliana (Mouse-ear cress).